The sequence spans 926 residues: Bifunctional uridylyltransferase/uridylyl-removing enzyme (926 aa).

Residues 1 to 379 form a uridylyltransferase region; it reads MPVSFLSLAS…PKSRRSGASK (379 aa). Positions 380 to 736 are uridylyl-removing; the sequence is QIDGFPVIQG…GHEMPAYDAT (357 aa). Residues 496–618 form the HD domain; it reads VDEHAIRALD…VKSPERLRLL (123 aa). ACT domains lie at 737-814 and 849-926; these read MISL…IRSS and VIEV…ISEK.

It belongs to the GlnD family. Requires Mg(2+) as cofactor.

It carries out the reaction [protein-PII]-L-tyrosine + UTP = [protein-PII]-uridylyl-L-tyrosine + diphosphate. The enzyme catalyses [protein-PII]-uridylyl-L-tyrosine + H2O = [protein-PII]-L-tyrosine + UMP + H(+). With respect to regulation, uridylyltransferase (UTase) activity is inhibited by glutamine, while glutamine activates uridylyl-removing (UR) activity. Modifies, by uridylylation and deuridylylation, the PII regulatory proteins (GlnB and homologs), in response to the nitrogen status of the cell that GlnD senses through the glutamine level. Under low glutamine levels, catalyzes the conversion of the PII proteins and UTP to PII-UMP and PPi, while under higher glutamine levels, GlnD hydrolyzes PII-UMP to PII and UMP (deuridylylation). Thus, controls uridylylation state and activity of the PII proteins, and plays an important role in the regulation of nitrogen assimilation and metabolism. This chain is Bifunctional uridylyltransferase/uridylyl-removing enzyme, found in Zymomonas mobilis subsp. mobilis (strain ATCC 31821 / ZM4 / CP4).